The primary structure comprises 369 residues: Molybdenum import ATP-binding protein ModC (369 aa).

The ABC transporter domain maps to 4-239 (LQLRAVVADR…PRSRFGARIA (236 aa)). 31-38 (GPNGAGKS) contributes to the ATP binding site. Positions 293 to 361 (HGSPRNIVGL…VKAQEVALHP (69 aa)) constitute a Mop domain.

It belongs to the ABC transporter superfamily. Molybdate importer (TC 3.A.1.8) family. The complex is composed of two ATP-binding proteins (ModC), two transmembrane proteins (ModB) and a solute-binding protein (ModA).

Its subcellular location is the cell membrane. It catalyses the reaction molybdate(out) + ATP + H2O = molybdate(in) + ADP + phosphate + H(+). Its function is as follows. Part of the ABC transporter complex ModABC involved in molybdenum import. Responsible for energy coupling to the transport system. The protein is Molybdenum import ATP-binding protein ModC of Mycobacterium tuberculosis (strain CDC 1551 / Oshkosh).